We begin with the raw amino-acid sequence, 161 residues long: 2-C-methyl-D-erythritol 2,4-cyclodiphosphate synthase (161 aa).

A divalent metal cation is bound by residues D10 and H12. Residues 10-12 and 36-37 contribute to the 4-CDP-2-C-methyl-D-erythritol 2-phosphate site; these read DVH and HS. A divalent metal cation is bound at residue H44. 4-CDP-2-C-methyl-D-erythritol 2-phosphate is bound by residues 58–60, 63–67, 102–108, 134–137, F141, and R144; these read DIG, FPDTD, AQAPKMA, and TTTE.

It belongs to the IspF family. Homotrimer. The cofactor is a divalent metal cation.

It catalyses the reaction 4-CDP-2-C-methyl-D-erythritol 2-phosphate = 2-C-methyl-D-erythritol 2,4-cyclic diphosphate + CMP. It functions in the pathway isoprenoid biosynthesis; isopentenyl diphosphate biosynthesis via DXP pathway; isopentenyl diphosphate from 1-deoxy-D-xylulose 5-phosphate: step 4/6. Functionally, involved in the biosynthesis of isopentenyl diphosphate (IPP) and dimethylallyl diphosphate (DMAPP), two major building blocks of isoprenoid compounds. Catalyzes the conversion of 4-diphosphocytidyl-2-C-methyl-D-erythritol 2-phosphate (CDP-ME2P) to 2-C-methyl-D-erythritol 2,4-cyclodiphosphate (ME-CPP) with a corresponding release of cytidine 5-monophosphate (CMP). The polypeptide is 2-C-methyl-D-erythritol 2,4-cyclodiphosphate synthase (Shewanella baltica (strain OS155 / ATCC BAA-1091)).